The primary structure comprises 453 residues: Serine/threonine-protein phosphatase 2A regulatory subunit B'' subunit gamma (453 aa).

2 EF-hand domains span residues 273-308 (PSAL…TMTN) and 341-376 (KEPA…IQEL). D286, D288, N290, M292, and E297 together coordinate Ca(2+).

In terms of assembly, interacts with MCM3AP/GANP, PPP5C, and the phosphatase 2A core enzyme composed of the PPP2CA catalytic subunit and the constant regulatory subunit PPP2R1A. Finds in a complex with ABCB1, TFPI2 and PPP2R3C; leading to the dephosphorylation of ABCB1.

It is found in the nucleus. The protein localises to the cytoplasm. Its function is as follows. May regulate MCM3AP phosphorylation through phosphatase recruitment. May act as a negative regulator of ABCB1 expression and function through the dephosphorylation of ABCB1 by TFPI2/PPP2R3C complex. May play a role in the activation-induced cell death of B-cells. The sequence is that of Serine/threonine-protein phosphatase 2A regulatory subunit B'' subunit gamma (PPP2R3C) from Bos taurus (Bovine).